We begin with the raw amino-acid sequence, 191 residues long: Ion-translocating oxidoreductase complex subunit B (191 aa).

Positions 1–26 are hydrophobic; it reads MSLVLVAVLALLGLCLIAGAILGFAA. The 4Fe-4S domain maps to 32-90; sequence EGDPIAEQINALLPQTQCGQCGYPGCKPYAEAIAGGDKINKCPPGGEATIQALADLLDV. [4Fe-4S] cluster contacts are provided by Cys-49, Cys-52, Cys-57, Cys-73, Cys-114, Cys-117, Cys-120, Cys-124, Cys-144, Cys-147, Cys-150, and Cys-154. 4Fe-4S ferredoxin-type domains are found at residues 105 to 134 and 135 to 164; these read MVAFIREAECIGCTKCIQACPVDAIVGAAR and QMHTVIVSECTGCDLCVEPCPVDCIDMIEV.

This sequence belongs to the 4Fe4S bacterial-type ferredoxin family. RnfB subfamily. As to quaternary structure, the complex is composed of six subunits: RnfA, RnfB, RnfC, RnfD, RnfE and RnfG. The cofactor is [4Fe-4S] cluster.

It is found in the cell inner membrane. Part of a membrane-bound complex that couples electron transfer with translocation of ions across the membrane. This chain is Ion-translocating oxidoreductase complex subunit B, found in Ectopseudomonas mendocina (strain ymp) (Pseudomonas mendocina).